The sequence spans 264 residues: Thymidylate synthase (264 aa).

Residue Arg-21 coordinates dUMP. His-51 provides a ligand contact to (6R)-5,10-methylene-5,6,7,8-tetrahydrofolate. 126 to 127 (RR) contributes to the dUMP binding site. Cys-146 serves as the catalytic Nucleophile. Residues 166 to 169 (RSAD), Asn-177, and 207 to 209 (HLY) contribute to the dUMP site. Residue Asp-169 coordinates (6R)-5,10-methylene-5,6,7,8-tetrahydrofolate. Residue Ser-263 coordinates (6R)-5,10-methylene-5,6,7,8-tetrahydrofolate.

The protein belongs to the thymidylate synthase family. Bacterial-type ThyA subfamily. As to quaternary structure, homodimer.

Its subcellular location is the cytoplasm. The enzyme catalyses dUMP + (6R)-5,10-methylene-5,6,7,8-tetrahydrofolate = 7,8-dihydrofolate + dTMP. It participates in pyrimidine metabolism; dTTP biosynthesis. Functionally, catalyzes the reductive methylation of 2'-deoxyuridine-5'-monophosphate (dUMP) to 2'-deoxythymidine-5'-monophosphate (dTMP) while utilizing 5,10-methylenetetrahydrofolate (mTHF) as the methyl donor and reductant in the reaction, yielding dihydrofolate (DHF) as a by-product. This enzymatic reaction provides an intracellular de novo source of dTMP, an essential precursor for DNA biosynthesis. The sequence is that of Thymidylate synthase from Neisseria meningitidis serogroup A / serotype 4A (strain DSM 15465 / Z2491).